Here is a 382-residue protein sequence, read N- to C-terminus: MKALHFGAGNIGRGFIGKLLADAGIQLTFADVNQVVLDALNARHSYQVHVVGETEQVDTVSGVNAVSSIGDDVVDLIAQVDLVTTAVGPVVLERIAPAIAKGLVKRKEQSNESPLNIIACENMVRGTTQLKGHVMNALPEDAKAWVEEHVGFVDSAVDRIVPPSASATNDPLEVTVETFSEWIVDKTQFKGALPNIPGMELTDNLMAFVERKLFTLNTGHAITAYLGKLAGHQTIRDAILDEKIRAVVKGAMEESGAVLIKRYGFDADKHAAYIQKILGRFENPYLKDDVERVGRQPLRKLSAGDRLIKPLLGTLEYGLPHKNLIEGIAAAMHFRSEDDPQAQELAALIADKGPQAALAQISGLDANSEVVSEAVTAYKAMQ.

3–14 (ALHFGAGNIGRG) is an NAD(+) binding site. An N6-acetyllysine modification is found at Lys-269.

It belongs to the mannitol dehydrogenase family.

It carries out the reaction D-mannitol 1-phosphate + NAD(+) = beta-D-fructose 6-phosphate + NADH + H(+). The protein is Mannitol-1-phosphate 5-dehydrogenase of Escherichia coli O9:H4 (strain HS).